The sequence spans 320 residues: MSVRSLRWPRQKAFLAVISLVVAVLLAVPGWLTPATAASQATVQFVAPTWAAERLNNKQLKILDVRTNPLAYIEGHLPGAVNIADAAYRGPNGFLPVQIWDPEKLASLFGRAGVSNNDTVLVYSDGNDVLGATLVAYLLERSGVQNIAVLDGGYKGYKDAGLPVTKEYPRYQAARFAPKDNRAFRVDIKQVEQLTGKSTFVDPRPPALFSGEQQVFIRNGHIPGARNIPWPTFTEANNANESLKNPHKLKPLSELKAILEAKGVTPDKDVIVTCSTGREASLQYLVLKHLLKYPKVRIYEGSWTEYSASNLPVETGPDRV.

Positions 1–37 (MSVRSLRWPRQKAFLAVISLVVAVLLAVPGWLTPATA) are cleaved as a signal peptide. Rhodanese domains lie at 56-166 (NNKQ…PVTK) and 194-315 (LTGK…PVET). Cys-274 functions as the Cysteine persulfide intermediate in the catalytic mechanism.

It is found in the periplasm. It catalyses the reaction thiosulfate + hydrogen cyanide = thiocyanate + sulfite + 2 H(+). In terms of biological role, may be a sulfotransferase involved in the transport of sulfate. Displays very low rhodanese activity. This Synechococcus elongatus (strain ATCC 33912 / PCC 7942 / FACHB-805) (Anacystis nidulans R2) protein is Putative thiosulfate sulfurtransferase (rhdA).